Here is a 749-residue protein sequence, read N- to C-terminus: Tryptophan 2-monooxygenase (749 aa).

FMN contacts are provided by S232, E252, K260, and R280. Residue R280 coordinates substrate.

The protein belongs to the tryptophan 2-monooxygenase family. It depends on FMN as a cofactor.

The catalysed reaction is L-tryptophan + O2 = indole-3-acetamide + CO2 + H2O. The protein operates within plant hormone metabolism; auxin biosynthesis. This is Tryptophan 2-monooxygenase (aux1) from Rhizobium rhizogenes (Agrobacterium rhizogenes).